Here is a 259-residue protein sequence, read N- to C-terminus: Ubiquinone/menaquinone biosynthesis C-methyltransferase UbiE (259 aa).

Residues T82, D103, and 131–132 each bind S-adenosyl-L-methionine; that span reads NA.

Belongs to the class I-like SAM-binding methyltransferase superfamily. MenG/UbiE family.

It catalyses the reaction a 2-demethylmenaquinol + S-adenosyl-L-methionine = a menaquinol + S-adenosyl-L-homocysteine + H(+). It carries out the reaction a 2-methoxy-6-(all-trans-polyprenyl)benzene-1,4-diol + S-adenosyl-L-methionine = a 5-methoxy-2-methyl-3-(all-trans-polyprenyl)benzene-1,4-diol + S-adenosyl-L-homocysteine + H(+). It participates in quinol/quinone metabolism; menaquinone biosynthesis; menaquinol from 1,4-dihydroxy-2-naphthoate: step 2/2. It functions in the pathway cofactor biosynthesis; ubiquinone biosynthesis. Methyltransferase required for the conversion of demethylmenaquinol (DMKH2) to menaquinol (MKH2) and the conversion of 2-polyprenyl-6-methoxy-1,4-benzoquinol (DDMQH2) to 2-polyprenyl-3-methyl-6-methoxy-1,4-benzoquinol (DMQH2). The chain is Ubiquinone/menaquinone biosynthesis C-methyltransferase UbiE from Agrobacterium fabrum (strain C58 / ATCC 33970) (Agrobacterium tumefaciens (strain C58)).